Consider the following 97-residue polypeptide: MSVTNVSNETNATKAVFDPPVGITAPPIDELLDKVTSKYALVIFAAKRARQINSFYHQADEGVFEFIGPLVTPQPGEKPLSIALREINAGLLDHEEG.

The protein belongs to the RNA polymerase subunit omega family. As to quaternary structure, the RNAP catalytic core consists of 2 alpha, 1 beta, 1 beta' and 1 omega subunit. When a sigma factor is associated with the core the holoenzyme is formed, which can initiate transcription.

The catalysed reaction is RNA(n) + a ribonucleoside 5'-triphosphate = RNA(n+1) + diphosphate. Its function is as follows. Promotes RNA polymerase assembly. Latches the N- and C-terminal regions of the beta' subunit thereby facilitating its interaction with the beta and alpha subunits. The chain is DNA-directed RNA polymerase subunit omega from Corynebacterium glutamicum (strain ATCC 13032 / DSM 20300 / JCM 1318 / BCRC 11384 / CCUG 27702 / LMG 3730 / NBRC 12168 / NCIMB 10025 / NRRL B-2784 / 534).